The following is a 199-amino-acid chain: Protein Thf1 (199 aa).

A coiled-coil region spans residues 167 to 198; the sequence is QYSRVEKDISMYKSNIEKMKQALEIIALNLKT.

Belongs to the THF1 family.

Its function is as follows. May be involved in photosynthetic membrane biogenesis. This Prochlorococcus marinus (strain NATL1A) protein is Protein Thf1.